A 204-amino-acid polypeptide reads, in one-letter code: Large ribosomal subunit protein eL15 (204 aa).

A disordered region spans residues 185–204; that stretch reads GGSRRAAWKRKNREHMHRKR. Residues 190-204 are compositionally biased toward basic residues; that stretch reads AAWKRKNREHMHRKR.

Belongs to the eukaryotic ribosomal protein eL15 family.

The sequence is that of Large ribosomal subunit protein eL15 (RpL15) from Drosophila melanogaster (Fruit fly).